Here is an 87-residue protein sequence, read N- to C-terminus: U14-lycotoxin-Ls1a (87 aa).

A signal peptide spans 1-20; that stretch reads MNSKVFAALLLLALSTCVLS. Positions 21–66 constitute a WAP domain; the sequence is EKYCPTPRNTSCKKMNIRNNCCRDSDCTSNAFCCAEPCGNFCHKAS. 5 disulfides stabilise this stretch: C24-C54, C32-C58, C41-C53, C42-C80, and C47-C62.

It belongs to the venom protein 11 family. 01 (wap-1) subfamily. Contains 5 disulfide bonds. As to expression, expressed by the venom gland.

Its subcellular location is the secreted. In terms of biological role, has antibacterial activity. The polypeptide is U14-lycotoxin-Ls1a (Lycosa singoriensis (Wolf spider)).